A 289-amino-acid polypeptide reads, in one-letter code: Thioredoxin-like protein 1 (289 aa).

In terms of domain architecture, Thioredoxin spans 2 to 109; it reads VGVKPVGSDP…EEKIKQHLEN (108 aa). Residues C34 and C37 are joined by a disulfide bond. S113 carries the post-translational modification Phosphoserine. The 171-residue stretch at 115 to 285 folds into the PITH domain; it reads EDTDIPKGYM…NDFKRVVGKK (171 aa).

As to quaternary structure, component of the 19S regulatory cap of the 26S proteasome. Interacts with PSMD14/RPN11. Interacts with, and reduces EEF1A1. In terms of tissue distribution, ubiquitous.

It is found in the cytoplasm. Its subcellular location is the nucleus. Functionally, active thioredoxin with a redox potential of about -250 mV. The protein is Thioredoxin-like protein 1 (TXNL1) of Homo sapiens (Human).